Here is a 336-residue protein sequence, read N- to C-terminus: Abasic site processing protein HMCES (336 aa).

The active-site Nucleophile is the Cys2. The residue at position 2 (Cys2) is a Thiazolidine linkage to a ring-opened DNA abasic site. A disordered region spans residues 26-51; sequence RQKCPKWRDGDTDKYQPSYNKSPQSN. Positions 40 to 51 are enriched in polar residues; it reads YQPSYNKSPQSN. Glu129 is an active-site residue. The segment at 285 to 336 is disordered; it reads QNKSPKKEESRSIIQSPKLSQFGAPPKKTSAGLMQQWLKKEDGEPSPKRAKK. Positions 322–336 are enriched in basic and acidic residues; sequence LKKEDGEPSPKRAKK.

Belongs to the SOS response-associated peptidase family. Ubiquitination of the hmces DNA-protein cross-link by rfwd3 may promotes its degradation.

It is found in the chromosome. Its activity is regulated as follows. Formation and reversal of DNA-protein cross-link depends on DNA context. Catalyzes formation of the thiazolidine linkage in presence of abasic sites in single-stranded DNA. Mediates the reversal of the thiazolidine cross-link in presence of double stranded DNA. Sensor of abasic sites in single-stranded DNA (ssDNA) required to preserve genome integrity by promoting error-free repair of abasic sites. Acts as an enzyme that recognizes and binds abasic sites in ssDNA at replication forks and chemically modifies the lesion by forming a covalent cross-link with DNA: forms a stable thiazolidine linkage between a ring-opened abasic site and the alpha-amino and sulfhydryl substituents of its N-terminal catalytic cysteine residue. The hmces DNA-protein cross-link is then either reversed or degraded. Hmces is able to catalyze the reversal of its thiazolidine cross-link and cycle between a cross-link and a non-cross-linked state depending on DNA context: mediates self-reversal of the thiazolidine cross-link in double stranded DNA, allowing apex1 to initiate downstream repair of abasic sites. The hmces DNA-protein cross-link can also be degraded by the sprtn metalloprotease following unfolding by the brip1/fancj helicase. Promotes error-free repair of abasic sites by protecting abasic sites from translesion synthesis (TLS) polymerases and endonucleases that are error-prone and would generate mutations and double-strand breaks. Acts as a protease: mediates autocatalytic processing of its N-terminal methionine in order to expose the catalytic cysteine. The HMCES DNA-protein cross-link is then either reversed or degraded. According to a model, the HMCES DNA-protein cross-link. The sequence is that of Abasic site processing protein HMCES from Xenopus laevis (African clawed frog).